A 1320-amino-acid polypeptide reads, in one-letter code: Centrosomin (1320 aa).

The disordered stretch occupies residues 20 to 41; it reads ASFDVPRPPGGGNSPLPSQGRS. The stretch at 97-516 forms a coiled coil; it reads RKTVDVKMEL…SSQEKEIKKL (420 aa). The segment covering 517-530 has biased composition (basic and acidic residues); sequence NQENEQSANKENDC. Positions 517 to 554 are disordered; it reads NQENEQSANKENDCAKTVISPSSSGRSMSDNEASSQEM. The segment covering 535–554 has biased composition (polar residues); it reads ISPSSSGRSMSDNEASSQEM. S545 carries the phosphoserine modification. 2 coiled-coil regions span residues 626–654 and 712–983; these read EADL…KVDV and NSLL…LKLA. The Nuclear localization signal motif lies at 644–656; sequence RNKLLQRKVDVLF. At T782 the chain carries Phosphothreonine. S785 is subject to Phosphoserine. Residues 810-823 are compositionally biased toward basic and acidic residues; the sequence is KKELEKRRSSEGQR. Disordered regions lie at residues 810–849 and 863–893; these read KKEL…SEPD and SNSL…NRNS. Residues 831 to 843 show a composition bias toward polar residues; that stretch reads LPSQQFDNQSESE. A phosphoserine mark is found at S874, S876, S878, S1191, S1234, S1237, and S1239. The tract at residues 1220–1249 is disordered; it reads VEMKTEGSASPKAKSEESTSPDSKSNVATG. Over residues 1237–1247 the composition is skewed to polar residues; it reads STSPDSKSNVA.

In terms of assembly, monomer. As to expression, developing visceral mesoderm of the midgut, the central and peripheral nervous system, and developing gonads. Isoform J: Expressed in ovaries, testis and embryos. Isoform A: Expressed in testis only.

The protein localises to the cytoplasm. Its subcellular location is the cytoskeleton. It localises to the microtubule organizing center. It is found in the centrosome. The protein resides in the flagellum basal body. The protein localises to the perinuclear region. Its function is as follows. Core component of the centrosome throughout spermatogenesis. May participate in mitotic spindle assembly and the mechanics of morphogenesis through an interaction with microtubules, either directly or indirectly. Is a target of several homeotic genes. The polypeptide is Centrosomin (cnn) (Drosophila melanogaster (Fruit fly)).